Reading from the N-terminus, the 394-residue chain is 1-deoxy-D-xylulose 5-phosphate reductoisomerase (394 aa).

NADPH-binding residues include Thr13, Gly14, Ser15, Ile16, and Asn127. Residue Lys128 participates in 1-deoxy-D-xylulose 5-phosphate binding. Position 129 (Glu129) interacts with NADPH. Residue Asp153 participates in Mn(2+) binding. 1-deoxy-D-xylulose 5-phosphate contacts are provided by Ser154, Glu155, Ser184, and His207. Glu155 is a binding site for Mn(2+). Residue Gly213 participates in NADPH binding. 1-deoxy-D-xylulose 5-phosphate is bound by residues Ser220, Asn225, Lys226, and Glu229. Glu229 provides a ligand contact to Mn(2+).

The protein belongs to the DXR family. The cofactor is Mg(2+). It depends on Mn(2+) as a cofactor.

It catalyses the reaction 2-C-methyl-D-erythritol 4-phosphate + NADP(+) = 1-deoxy-D-xylulose 5-phosphate + NADPH + H(+). The protein operates within isoprenoid biosynthesis; isopentenyl diphosphate biosynthesis via DXP pathway; isopentenyl diphosphate from 1-deoxy-D-xylulose 5-phosphate: step 1/6. Functionally, catalyzes the NADPH-dependent rearrangement and reduction of 1-deoxy-D-xylulose-5-phosphate (DXP) to 2-C-methyl-D-erythritol 4-phosphate (MEP). This Ectopseudomonas mendocina (strain ymp) (Pseudomonas mendocina) protein is 1-deoxy-D-xylulose 5-phosphate reductoisomerase.